The chain runs to 427 residues: Glutamate-1-semialdehyde 2,1-aminomutase (427 aa).

N6-(pyridoxal phosphate)lysine is present on Lys-264.

The protein belongs to the class-III pyridoxal-phosphate-dependent aminotransferase family. HemL subfamily. As to quaternary structure, homodimer. Pyridoxal 5'-phosphate is required as a cofactor.

It localises to the cytoplasm. It carries out the reaction (S)-4-amino-5-oxopentanoate = 5-aminolevulinate. It participates in porphyrin-containing compound metabolism; protoporphyrin-IX biosynthesis; 5-aminolevulinate from L-glutamyl-tRNA(Glu): step 2/2. The polypeptide is Glutamate-1-semialdehyde 2,1-aminomutase (Clostridium botulinum (strain Eklund 17B / Type B)).